The following is a 702-amino-acid chain: ATP-dependent RNA helicase DDX4 (702 aa).

Positions 22–228 (FEKDKYSSGA…YIPPPPPEDE (207 aa)) are disordered. A compositionally biased stretch (polar residues) spans 29–46 (SGANGDTFNRTSASSDIG). Gly residues-rich tracts occupy residues 58–68 (GGFGRGKGFGN) and 125–137 (RGSFRGCRGGFGL). Polar residues-rich tracts occupy residues 141 to 150 (NSESDQDQGT) and 195 to 215 (SGKNSWKSETEGGESSDSQGP). Phosphoserine occurs at positions 195 and 199. Residues 201–220 (KSETEGGESSDSQGPKVTYI) form an interaction with RANBP9 region. Residues 261-289 (LTFEEANLCQTLNNNIAKAGYTKLTPVQK) carry the Q motif motif. In terms of domain architecture, Helicase ATP-binding spans 292-475 (IPIVLAGRDL…GDFLKSSYLF (184 aa)). 305 to 312 (AQTGSGKT) lines the ATP pocket. Residues 419–422 (DEAD) carry the DEAD box motif. Positions 503 to 648 (KLVEILRNIG…DVPAWLEEIA (146 aa)) constitute a Helicase C-terminal domain. The span at 681–693 (TLNTAGISSSQAP) shows a compositional bias: polar residues. The segment at 681–702 (TLNTAGISSSQAPNPVDDESWD) is disordered. A Phosphoserine modification is found at Ser-700.

It belongs to the DEAD box helicase family. DDX4/VASA subfamily. In terms of assembly, found in a mRNP complex, at least composed of TDRD1, TDRD6, TDRD7 and DDX4. Interacts with RANBP9. Interacts with RANBP10. Interacts with PIWIL2 and MAEL. Interacts with BMAL1 and CLOCK. Interacts with Tex19.1 and, probably, Tex19.2. Interacts with RBM46. Testis-specific.

Its subcellular location is the cytoplasm. It is found in the perinuclear region. It carries out the reaction ATP + H2O = ADP + phosphate + H(+). Functionally, ATP-dependent RNA helicase required during spermatogenesis to repress transposable elements and preventing their mobilization, which is essential for the germline integrity. Acts via the piRNA metabolic process, which mediates the repression of transposable elements during meiosis by forming complexes composed of piRNAs and Piwi proteins and governs the methylation and subsequent repression of transposons. Involved in the secondary piRNAs metabolic process, the production of piRNAs in fetal male germ cells through a ping-pong amplification cycle. Required for PIWIL2 slicing-triggered piRNA biogenesis: helicase activity enables utilization of one of the slice cleavage fragments generated by PIWIL2 and processing these pre-piRNAs into piRNAs. The polypeptide is ATP-dependent RNA helicase DDX4 (Mus musculus (Mouse)).